The following is a 103-amino-acid chain: Large ribosomal subunit protein bL21 (103 aa).

It belongs to the bacterial ribosomal protein bL21 family. In terms of assembly, part of the 50S ribosomal subunit. Contacts protein L20.

This protein binds to 23S rRNA in the presence of protein L20. This chain is Large ribosomal subunit protein bL21, found in Alteromonas mediterranea (strain DSM 17117 / CIP 110805 / LMG 28347 / Deep ecotype).